A 679-amino-acid chain; its full sequence is Glycine--tRNA ligase beta subunit (679 aa).

Belongs to the class-II aminoacyl-tRNA synthetase family. Tetramer of two alpha and two beta subunits.

The protein resides in the cytoplasm. The catalysed reaction is tRNA(Gly) + glycine + ATP = glycyl-tRNA(Gly) + AMP + diphosphate. The protein is Glycine--tRNA ligase beta subunit of Streptococcus gordonii (strain Challis / ATCC 35105 / BCRC 15272 / CH1 / DL1 / V288).